A 447-amino-acid chain; its full sequence is uncharacterized protein (447 aa).

In terms of domain architecture, FAD-binding PCMH-type spans 29 to 201 (VDVYPLVFVF…TQYTFKVHRA (173 aa)).

The protein belongs to the oxygen-dependent FAD-linked oxidoreductase family. It depends on FAD as a cofactor.

It is found in the spore coat. This is an uncharacterized protein from Bacillus subtilis (strain 168).